Reading from the N-terminus, the 408-residue chain is MIHQPPAGARDLLPLEVAQKGWINDCLQQVFQRWGYQRIVTSTIEWLDTLMAGGAIERSTVIQLQDTSEGTLGLRPELTASIARTAVSRMADSTYPQRICYRANVFRNPPPGYHGRQLEFYQAGVELLFAGGLLADGEILLLVADCLETLGLTDWHLILGEAGLTRSLLSVFPDPLRQQVRHCLAHLDYITLENLTYPSADLRERALLLFDLRGNPADVLSKVASLELEESDRIIVNNFKSLIHLIEQSHPNPLPLILDLSLVQTFDYYTGLVFKVVSSSDNQLRVLGQGGRYDQLLGLYHPQHQSAPGIGFSLNLEDLHLCLLSTSSSGMPRQIPVIDWLVIAQTTQSQVAAFNYAQLLRNSNTLVRVALDLGGRSPEEIRDYARTCRIKTLVWIGEDGTPRIETVQ.

Belongs to the class-II aminoacyl-tRNA synthetase family. HisZ subfamily. As to quaternary structure, heteromultimer composed of HisG and HisZ subunits.

It is found in the cytoplasm. The protein operates within amino-acid biosynthesis; L-histidine biosynthesis; L-histidine from 5-phospho-alpha-D-ribose 1-diphosphate: step 1/9. Its function is as follows. Required for the first step of histidine biosynthesis. May allow the feedback regulation of ATP phosphoribosyltransferase activity by histidine. The polypeptide is ATP phosphoribosyltransferase regulatory subunit (Gloeothece citriformis (strain PCC 7424) (Cyanothece sp. (strain PCC 7424))).